Consider the following 197-residue polypeptide: Putative ankyrin repeat protein R875 (197 aa).

ANK repeat units follow at residues 78-106, 107-136, 138-166, and 168-196; these read LNKCLIGYCISGRLDIVKYLVILGADIRE, NDDCVVRTACHNGHIEVVKYLVNQGADIRA, DDDAIRLASKNGHLYVVKYLVSQGVNFRK, and NDYEINWASQNGHGSVVDFLVSKGAVLHE.

This Acanthamoeba polyphaga mimivirus (APMV) protein is Putative ankyrin repeat protein R875.